The sequence spans 443 residues: Tubulin beta chain (443 aa).

GTP-binding residues include Gln-11, Glu-69, Ser-138, Gly-142, Thr-143, Gly-144, Asn-204, and Asn-226. Residue Glu-69 participates in Mg(2+) binding. The interval 424-443 (QYQDATAEEEGEFEEEEGEN) is disordered. Positions 429-443 (TAEEEGEFEEEEGEN) are enriched in acidic residues.

The protein belongs to the tubulin family. Dimer of alpha and beta chains. A typical microtubule is a hollow water-filled tube with an outer diameter of 25 nm and an inner diameter of 15 nM. Alpha-beta heterodimers associate head-to-tail to form protofilaments running lengthwise along the microtubule wall with the beta-tubulin subunit facing the microtubule plus end conferring a structural polarity. Microtubules usually have 13 protofilaments but different protofilament numbers can be found in some organisms and specialized cells. The cofactor is Mg(2+). Post-translationally, some glutamate residues at the C-terminus are either polyglutamylated or polyglycylated. These 2 modifications occur exclusively on glutamate residues and result in either polyglutamate or polyglycine chains on the gamma-carboxyl group. Both modifications can coexist on the same protein on adjacent residues, and lowering polyglycylation levels increases polyglutamylation, and reciprocally. The precise function of such modifications is still unclear but they regulate the assembly and dynamics of axonemal microtubules.

Its subcellular location is the cytoplasm. It localises to the cytoskeleton. Tubulin is the major constituent of microtubules, a cylinder consisting of laterally associated linear protofilaments composed of alpha- and beta-tubulin heterodimers. Microtubules grow by the addition of GTP-tubulin dimers to the microtubule end, where a stabilizing cap forms. Below the cap, tubulin dimers are in GDP-bound state, owing to GTPase activity of alpha-tubulin. This Tetrahymena thermophila protein is Tubulin beta chain (BTU1).